The primary structure comprises 402 residues: MMVHCAGCERPILDRFLLNVLDRAWHIKCVQCCECKTNLSEKCFSREGKLYCKNDFFRRFGTKCAGCAQGISPSDLVRKARSKVFHLNCFTCMVCNKQLSTGEELYVIDENKFVCKDDYLSSSSLKEGSLNSVSSCTDRSLSPDLQDALQDDPKETDNSTSSDKETANNENEEQNSGTKRRGPRTTIKAKQLETLKAAFAATPKPTRHIREQLAQETGLNMRVIQVWFQNRRSKERRMKQLSALGARRHAFFRSPRRMRPLGGRLDESEMLGSTPYTYYGDYQGDYYAPGSNYDFFAHGPPSQAQSPADSSFLAASGPGSTPLGALEPPLAGPHAADNPRFTDMISHPDTPSPEPGLPGTLHPMPGEVFSGGPSPPFPMSGTSGYSGPLSHPNPELNEAAVW.

LIM zinc-binding domains follow at residues 3–61 (VHCA…RRFG) and 62–125 (TKCA…SSSL). Residues 124–135 (SLKEGSLNSVSS) are compositionally biased toward low complexity. Disordered stretches follow at residues 124-186 (SLKE…PRTT) and 298-402 (HGPP…AAVW). Positions 151–167 (DDPKETDNSTSSDKETA) are enriched in basic and acidic residues. A DNA-binding region (homeobox) is located at residues 180–239 (RRGPRTTIKAKQLETLKAAFAATPKPTRHIREQLAQETGLNMRVIQVWFQNRRSKERRMK). 2 stretches are compositionally biased toward low complexity: residues 300-311 (PPSQAQSPADSS) and 322-336 (PLGA…PHAA).

In terms of tissue distribution, expressed in fetal brain and in various regions of the adult central nervous system including the spinal cord, the thalamus, and the cerebellum.

It is found in the nucleus. Plays an essential role in the regulation of neuronal differentiation and migration during development of the central nervous system. In Homo sapiens (Human), this protein is LIM/homeobox protein Lhx5 (LHX5).